A 322-amino-acid polypeptide reads, in one-letter code: Phosphatidylserine decarboxylase proenzyme (322 aa).

Catalysis depends on charge relay system; for autoendoproteolytic cleavage activity residues D90, H147, and S254. S254 functions as the Schiff-base intermediate with substrate; via pyruvic acid; for decarboxylase activity in the catalytic mechanism. Position 254 is a pyruvic acid (Ser); by autocatalysis (S254). The segment at 296–322 (EPAPLPAEEIKAEHDASPLVDNKKDDT) is disordered. The span at 303–322 (EEIKAEHDASPLVDNKKDDT) shows a compositional bias: basic and acidic residues.

The protein belongs to the phosphatidylserine decarboxylase family. PSD-B subfamily. Prokaryotic type I sub-subfamily. Heterodimer of a large membrane-associated beta subunit and a small pyruvoyl-containing alpha subunit. Pyruvate is required as a cofactor. Is synthesized initially as an inactive proenzyme. Formation of the active enzyme involves a self-maturation process in which the active site pyruvoyl group is generated from an internal serine residue via an autocatalytic post-translational modification. Two non-identical subunits are generated from the proenzyme in this reaction, and the pyruvate is formed at the N-terminus of the alpha chain, which is derived from the carboxyl end of the proenzyme. The autoendoproteolytic cleavage occurs by a canonical serine protease mechanism, in which the side chain hydroxyl group of the serine supplies its oxygen atom to form the C-terminus of the beta chain, while the remainder of the serine residue undergoes an oxidative deamination to produce ammonia and the pyruvoyl prosthetic group on the alpha chain. During this reaction, the Ser that is part of the protease active site of the proenzyme becomes the pyruvoyl prosthetic group, which constitutes an essential element of the active site of the mature decarboxylase.

It localises to the cell membrane. The enzyme catalyses a 1,2-diacyl-sn-glycero-3-phospho-L-serine + H(+) = a 1,2-diacyl-sn-glycero-3-phosphoethanolamine + CO2. It functions in the pathway phospholipid metabolism; phosphatidylethanolamine biosynthesis; phosphatidylethanolamine from CDP-diacylglycerol: step 2/2. Functionally, catalyzes the formation of phosphatidylethanolamine (PtdEtn) from phosphatidylserine (PtdSer). This is Phosphatidylserine decarboxylase proenzyme from Salmonella dublin (strain CT_02021853).